A 266-amino-acid chain; its full sequence is Regulatory protein RecX (266 aa).

The protein belongs to the RecX family.

Its subcellular location is the cytoplasm. Modulates RecA activity. This chain is Regulatory protein RecX, found in Enterococcus faecalis (strain ATCC 700802 / V583).